A 7067-amino-acid polypeptide reads, in one-letter code: Replicase polyprotein 1ab (7067 aa).

Residues 12–127 (THVQLSLPVL…YRNVLLRKNG (116 aa)) form the CoV Nsp1 globular domain. The BetaCoV Nsp1 C-terminal domain occupies 148 to 179 (ELGTDPIEDYEQNWNTKHGSGALRELTRELNG). The region spanning 183 to 456 (TRYVDNNFCG…NEDLLEILNR (274 aa)) is the CoV Nsp2 N-terminal domain. Zn(2+)-binding residues include Cys-200, Cys-231, His-234, His-236, Cys-323, Cys-326, Cys-341, Cys-344, Cys-370, Cys-373, His-382, and Cys-416. Positions 200–236 (CIKDFLARAGKSMCTLSEQLDYIESKRGVYCCREHEH) are C2H2. The C4 stretch occupies residues 323–344 (CNHCDEVSWQTCDFLKATCEQC). A C2HC region spans residues 370–416 (CPACQDPEVGPEHSVADYHNHSNIETRLRKGGRTKCFGGCVFSYVGC). The region spanning 458–688 (RVNINIVGDF…LGVVNKALEM (231 aa)) is the CoV Nsp2 middle domain. In terms of domain architecture, CoV Nsp2 C-terminal spans 690–818 (LDQVTIAGTK…TNNVFRLKGG (129 aa)). Residues 822–930 (KGVTFGEDTV…MYCSFYPPDE (109 aa)) enclose the Ubiquitin-like 1 domain. Macro domains lie at 998–1164 (VNQF…LDYL), 1201–1329 (KIKA…LPSE), and 1337–1464 (VLGT…TSSS). The region spanning 1466 to 1532 (TPEEYFVETT…PLDKLKSLLS (67 aa)) is the DPUP domain. The Ubiquitin-like 2 domain maps to 1536 to 1591 (VKTIKVFTTVDNTNLHTHIVDMSMTYGQQFGPTYLDGADVTKIKPHVNHEGKTFFV). One can recognise a Peptidase C16 domain in the interval 1605–1869 (YYHTIDESFL…YTEIEPKLDG (265 aa)). Cys-1645 (for PL-PRO activity) is an active-site residue. 4 residues coordinate Zn(2+): Cys-1723, Cys-1726, Cys-1758, and Cys-1760. The segment at 1723–1760 (CKHCGQKTTTLKGVEAVMYMGTLSYDELKTGVSIPCVC) adopts a C4-type zinc-finger fold. Active-site for PL-PRO activity residues include His-1806 and Asp-1820. The Nucleic acid-binding domain occupies 1882 to 1992 (PIDLVPTQPM…CLWSTKPVDT (111 aa)). The region spanning 2017–2126 (TTSEEVVENP…LGQTAVITSN (110 aa)) is the G2M domain. Residues 2086–2365 (LALGLKTLAT…IFFASFYYVW (280 aa)) are HD1. The helical transmembrane segment at 2197 to 2217 (LFTIVMWLLLLSICLGSLTYV) threads the bilayer. In terms of domain architecture, 3Ecto spans 2218 to 2288 (TAVLGVCLSS…QVTISSYKLD (71 aa)). 2 disulfides stabilise this stretch: Cys-2234/Cys-2262 and Cys-2253/Cys-2259. Helical transmembrane passes span 2298–2318 (WLLAYMLFTKFFYLLGLSAIM) and 2345–2365 (MAPVSAMVRMYIFFASFYYVW). Residues 2366-2456 (KSYVHIMDGC…QFKRPINPTD (91 aa)) are Y1. One can recognise a CoV Nsp3 Y domain in the interval 2366–2734 (KSYVHIMDGC…ITTKISLKGG (369 aa)). Zn(2+) is bound by residues His-2370, Cys-2375, Cys-2380, Cys-2383, Cys-2416, His-2419, Cys-2423, and Cys-2426. The ZF1 stretch occupies residues 2370 to 2383 (HIMDGCTSSTCMMC). The ZF2 stretch occupies residues 2416 to 2426 (CKAHNWNCLNC). The interval 2457 to 2551 (QSAYVVDSVT…LLDQALVSDV (95 aa)) is Y2. The coV-Y stretch occupies residues 2457–2734 (QSAYVVDSVT…ITTKISLKGG (278 aa)). Positions 2552–2633 (GDSTEVSVKM…ECLKLSHHSD (82 aa)) are Y3. Positions 2634–2734 (IEVTGDSCNN…ITTKISLKGG (101 aa)) are Y4. A run of 7 helical transmembrane segments spans residues 2744–2764 (LLKVTLLCVLAALFCYVIMPV), 2986–3006 (PGVFCGVDAMNLIANIFTPLV), 3016–3036 (ASVVAGGIIAILVTCAAYYFM), 3048–3068 (VVAANALLFLMSFTILCLAPA), 3071–3091 (FLPGVYSIFYLYLTFYFTNDV), 3099–3119 (WFAMFSPIVPFWITAIYVFCI), and 3136–3156 (VMFNGVTFSTFEEAALCTFLL). The tract at residues 2749-3156 (LLCVLAALFC…EEAALCTFLL (408 aa)) is HD2. The 99-residue stretch at 3136–3234 (VMFNGVTFST…QTSITSAVLQ (99 aa)) folds into the Nsp4C domain. Residues 3235-3540 (SGFRKMAFPS…VRQCSGVTFQ (306 aa)) form the Peptidase C30 domain. Residues His-3275 and Cys-3379 each act as for 3CL-PRO activity in the active site. The next 7 helical transmembrane spans lie at 3558 to 3578 (FLTSLLILVQSTQWSLFFFVY), 3580 to 3600 (NAFLPFALGIMAVAACAMLLV), 3606 to 3626 (FLCLFLLPSLATVAYFNMVYM), 3652 to 3672 (DCVMYASALVLLILMTARTVY), 3679 to 3698 (VWTLMNVITLVYKVYYGNSL), 3722 to 3742 (IMFLARAIVFVCVEYYPLLFI), and 3750 to 3770 (IMLVYCFLGYCCCCYFGLFCL). The segment at 3558 to 3770 (FLTSLLILVQ…CCCYFGLFCL (213 aa)) is HD3. Residues 3831–3913 (SKMSDVKCTS…EMLDNRATLQ (83 aa)) form the RdRp Nsp7 cofactor domain. In terms of domain architecture, RdRp Nsp8 cofactor spans 3914 to 4111 (AIASEFSSLP…LRANSAVKLQ (198 aa)). In terms of domain architecture, Nsp9 ssRNA-binding spans 4112 to 4224 (NNELSPVALR…GSLAATVRLQ (113 aa)). Residues 4225 to 4363 (AGNATEVPAN…CDQLREPMMQ (139 aa)) form the ExoN/MTase coactivator domain. Residues Cys-4298, Cys-4301, His-4307, Cys-4314, Cys-4341, Cys-4344, Cys-4352, and Cys-4354 each contribute to the Zn(2+) site. 2 zinc fingers span residues 4298-4314 (CLYCRCHIDHPNPKGFC) and 4341-4354 (CTVCGMWKGYGCSC). A NiRAN domain is found at 4370–4624 (FLNRVCGVSA…AAESHMDADL (255 aa)). Mn(2+)-binding residues include Asn-4572 and Asp-4581. Positions 4629 to 4727 (VKWDLLKYDF…HNQDVNLHSS (99 aa)) constitute a Nsp12 Interface domain. The Zn(2+) site is built by His-4658, Cys-4664, Cys-4669, Cys-4673, and Cys-4850. The Nsp12 RNA-dependent RNA polymerase domain maps to 4728–5295 (RLSFKELLVY…AMYTPHTVLQ (568 aa)). Positions 4730-4944 (SFKELLVYAA…HQKLLKSIAA (215 aa)) are rdRp Fingers N-ter. The tract at residues 4945 to 4983 (TRGATVVIGTSKFYGGWHNMLKTVYSDVESPHLMGWDYP) is rdRp Palm N-ter. Residues 4975–5137 (PHLMGWDYPK…CYNSNYAAQG (163 aa)) form the RdRp catalytic domain. The interval 4984 to 5042 (KCDRAMPNMLRIMASLILARKHSTCCNLSHRFYRLANECAQVLSEMVMCGGSLYVKPGG) is rdRp Fingers C-ter. Residues His-5005, Cys-5008, and Cys-5009 each contribute to the Zn(2+) site. The rdRp Palm C-ter stretch occupies residues 5043–5178 (TSSGDATTAY…TRGPHEFCSQ (136 aa)). Residues Ser-5122, Asp-5123, and Asp-5124 contribute to the active site. The tract at residues 5179-5295 (HTMLVKQGDD…AMYTPHTVLQ (117 aa)) is rdRp Thumb. The 113-residue stretch at 5296-5408 (AVGACVLCNS…TDFNAIATCD (113 aa)) folds into the CV ZBD domain. The Zn(2+) site is built by Cys-5300, Cys-5303, Cys-5311, Cys-5314, Cys-5321, Cys-5324, His-5328, His-5334, Cys-5345, Cys-5350, Cys-5367, and His-5370. The (+)RNA virus helicase ATP-binding domain occupies 5552-5733 (NISNEFSSNV…MKTIGPDMFL (182 aa)). Residue 5577 to 5584 (GPPGTGKS) coordinates ATP. A (+)RNA virus helicase C-terminal domain is found at 5734-5903 (GTCRRCPAEI…TLQAENVTGL (170 aa)). Residues 5968 to 6183 (MFITREEAIR…RCLAVHECFV (216 aa)) enclose the ExoN domain. Active-site residues include Asp-5986, Glu-5988, and Glu-6087. Residues Cys-6103, Cys-6106, Cys-6122, His-6125, His-6153, Cys-6157, and His-6160 each coordinate Zn(2+). Catalysis depends on residues His-6164 and Asp-6169. Cys-6175 is a binding site for Zn(2+). The N7-MTase domain maps to 6192 to 6423 (YPIIGDELKI…NLWNTFTKLQ (232 aa)). S-adenosyl-L-methionine is bound at residue 6227–6233 (DIGNPKA). The tract at residues 6310-6324 (CDGGSLYVNKHAFHT) is gpppA-binding. The Zn(2+) site is built by Cys-6348, Cys-6369, Cys-6380, and His-6383. Positions 6424–6484 (SLENVAYNVV…NVAFELWAKR (61 aa)) constitute a Nsp15 N-terminal oligomerization domain. The 126-residue stretch at 6485 to 6610 (NIKPVPEIKI…YFKKVDGIIQ (126 aa)) folds into the AV-Nsp11N/CoV-Nsp15M domain. One can recognise a NendoU domain in the interval 6627 to 6766 (KPRSQMETDF…KDGHVETFYP (140 aa)). Residues His-6657, His-6672, Lys-6712, Lys-6815, Asp-6899, Lys-6939, and Glu-6972 contribute to the active site. Residues 6771-7065 (SQAWQPGVAM…RVVVSSDILV (295 aa)) form the Nidovirus-type SAM-dependent 2'-O-MTase domain.

It belongs to the coronaviruses polyprotein 1ab family. As to quaternary structure, interacts with host PHB and PHB2. In terms of assembly, interacts with papain-like protease nsp3 and non-structural protein 6. Monomer. Homodimer. Only the homodimer shows catalytic activity. As to quaternary structure, interacts with nsp8 and nsp12 to form the replication-transcription complex (RTC): nsp12, nsp7, two subunits of nsp8, and up to two subunits of nsp13. In terms of assembly, interacts with nsp7, nsp13 and nsp12 to form the replication-transcription complex (RTC): nsp12, nsp7, two subunits of nsp8, and up to two subunits of nsp13. Interacts with nsp12. As to quaternary structure, interacts with proofreading exoribonuclease nsp14 and 2'-O-methyltransferase nsp16; these interactions enhance nsp14 and nsp16 enzymatic activities. In terms of assembly, interacts with nsp7 and nsp8 to form the replication-transcription complex (RTC): nsp12, nsp7, two subunits of nsp8, and up to two subunits of nsp13. Interacts with nsp9. Interacts with nsp8 to form the replication-transcription complex (RTC): nsp12, nsp7, two subunits of nsp8, and up to two subunits of nsp13. Requires Mn(2+) as cofactor. The cofactor is Mg(2+). Specific enzymatic cleavages in vivo by its own proteases yield mature proteins. 3CL-PRO and PL-PRO proteinases are autocatalytically processed.

It localises to the host membrane. The protein localises to the host cytoplasm. It is found in the host perinuclear region. Its subcellular location is the host endoplasmic reticulum-Golgi intermediate compartment. The enzyme catalyses RNA(n) + a ribonucleoside 5'-triphosphate = RNA(n+1) + diphosphate. The catalysed reaction is ATP + H2O = ADP + phosphate + H(+). It carries out the reaction Thiol-dependent hydrolysis of ester, thioester, amide, peptide and isopeptide bonds formed by the C-terminal Gly of ubiquitin (a 76-residue protein attached to proteins as an intracellular targeting signal).. It catalyses the reaction a 5'-end (N(7)-methyl 5'-triphosphoguanosine)-ribonucleoside in mRNA + S-adenosyl-L-methionine = a 5'-end (N(7)-methyl 5'-triphosphoguanosine)-(2'-O-methyl-ribonucleoside) in mRNA + S-adenosyl-L-homocysteine + H(+). The enzyme catalyses uridylyl-uridylyl-ribonucleotide-RNA = a 3'-end uridylyl-2',3'-cyclophospho-uridine-RNA + a 5'-end dephospho-ribonucleoside-RNA. The catalysed reaction is a 5'-end diphospho-ribonucleoside in mRNA + GTP + H(+) = a 5'-end (5'-triphosphoguanosine)-ribonucleoside in mRNA + diphosphate. It carries out the reaction a 5'-end (5'-triphosphoguanosine)-ribonucleoside in mRNA + S-adenosyl-L-methionine = a 5'-end (N(7)-methyl 5'-triphosphoguanosine)-ribonucleoside in mRNA + S-adenosyl-L-homocysteine. Functionally, the replicase polyprotein of coronaviruses is a multifunctional protein: it contains the activities necessary for the transcription of negative stranded RNA, leader RNA, subgenomic mRNAs and progeny virion RNA as well as proteinases responsible for the cleavage of the polyprotein into functional products. In terms of biological role, inhibits host translation by interacting with the 40S ribosomal subunit. The nsp1-40S ribosome complex further induces an endonucleolytic cleavage near the 5'UTR of host mRNAs, targeting them for degradation. Viral mRNAs are not susceptible to nsp1-mediated endonucleolytic RNA cleavage thanks to the presence of a 5'-end leader sequence and are therefore protected from degradation. By suppressing host gene expression, nsp1 facilitates efficient viral gene expression in infected cells and evasion from host immune response. Its function is as follows. May play a role in the modulation of host cell survival signaling pathway by interacting with host PHB and PHB2. Indeed, these two proteins play a role in maintaining the functional integrity of the mitochondria and protecting cells from various stresses. Responsible for the cleavages located at the N-terminus of the replicase polyprotein. In addition, PL-PRO possesses a deubiquitinating/deISGylating activity and processes both 'Lys-48'- and 'Lys-63'-linked polyubiquitin chains from cellular substrates. Participates together with nsp4 in the assembly of virally-induced cytoplasmic double-membrane vesicles necessary for viral replication. Antagonizes innate immune induction of type I interferon by blocking the phosphorylation, dimerization and subsequent nuclear translocation of host IRF3. Also prevents host NF-kappa-B signaling. Functionally, participates in the assembly of virally-induced cytoplasmic double-membrane vesicles necessary for viral replication. In terms of biological role, cleaves the C-terminus of replicase polyprotein at 11 sites. Recognizes substrates containing the core sequence [ILMVF]-Q-|-[SGACN]. Also able to bind an ADP-ribose-1''-phosphate (ADRP). Its function is as follows. Plays a role in the initial induction of autophagosomes from host endoplasmic reticulum. Later, limits the expansion of these phagosomes that are no longer able to deliver viral components to lysosomes. Forms a hexadecamer with nsp8 (8 subunits of each) that may participate in viral replication by acting as a primase. Alternatively, may synthesize substantially longer products than oligonucleotide primers. Functionally, forms a hexadecamer with nsp7 (8 subunits of each) that may participate in viral replication by acting as a primase. Alternatively, may synthesize substantially longer products than oligonucleotide primers. In terms of biological role, forms a primer, NSP9-pU, which is utilized by the polymerase for the initiation of RNA chains. Interacts with ribosome signal recognition particle RNA (SRP). Together with NSP8, suppress protein integration into the cell membrane, thereby disrupting host immune defenses. Its function is as follows. Plays a pivotal role in viral transcription by stimulating both nsp14 3'-5' exoribonuclease and nsp16 2'-O-methyltransferase activities. Therefore plays an essential role in viral mRNAs cap methylation. RNA-directed RNA polymerase that catalyzes the transcription of viral genomic and subgenomic RNAs. Acts in complex with nsp7 and nsp8 to transcribe both the minus and positive strands of genomic RNA. The kinase-like NiRAN domain of NSP12 attaches one or more nucleotides to the amino terminus of NSP9, forming a covalent RNA-protein intermediate that serves as transcription/replication primer. Subgenomic RNAs (sgRNAs) are formed by discontinuous transcription: The polymerase has the ability to pause at transcription-regulating sequences (TRS) and jump to the leader TRS, resulting in a major deletion. This creates a series of subgenomic RNAs that are replicated, transcribed and translated. In addition, Nsp12 is a subunit of the viral RNA capping enzyme that catalyzes the RNA guanylyltransferase reaction for genomic and sub-genomic RNAs. Subsequently, the NiRAN domain transfers RNA to GDP, and forms the core cap structure GpppA-RNA. Functionally, multi-functional protein with a zinc-binding domain in N-terminus displaying RNA and DNA duplex-unwinding activities with 5' to 3' polarity. Activity of helicase is dependent on magnesium. In terms of biological role, plays a role in viral RNA synthesis through two distinct activities. The N7-guanine methyltransferase activity plays a role in the formation of the cap structure GpppA-RNA. The proofreading exoribonuclease reduces the sensitivity of the virus to RNA mutagens during replication. This activity acts on both ssRNA and dsRNA in a 3'-5' direction. Its function is as follows. Plays a role in viral transcription/replication and prevents the simultaneous activation of host cell dsRNA sensors, such as MDA5/IFIH1, OAS, and PKR. Acts by degrading the 5'-polyuridines generated during replication of the poly(A) region of viral genomic and subgenomic RNAs. Catalyzes a two-step reaction in which a 2'3'-cyclic phosphate (2'3'-cP) is first generated by 2'-O transesterification, which is then hydrolyzed to a 3'-phosphate (3'-P). If not degraded, poly(U) RNA would hybridize with poly(A) RNA tails and activate host dsRNA sensors. Methyltransferase that mediates mRNA cap 2'-O-ribose methylation to the 5'-cap structure of viral mRNAs. N7-methyl guanosine cap is a prerequisite for binding of nsp16. Therefore plays an essential role in viral mRNAs cap methylation which is essential to evade immune system. This Bat coronavirus HKU3 (BtCoV) protein is Replicase polyprotein 1ab (rep).